The sequence spans 142 residues: Hemoglobin subunit alpha-2 (142 aa).

Ser1 carries the N-acetylserine modification. The Globin domain maps to 1 to 142; it reads SLSTKDKETV…LSRALSEKYR (142 aa). His59 contributes to the O2 binding site. His88 is a heme b binding site.

The protein belongs to the globin family. Hb2 is a heterotetramer of two alpha-2 chains and two beta chains. In terms of tissue distribution, red blood cells.

In terms of biological role, involved in oxygen transport from gills to the various peripheral tissues. The polypeptide is Hemoglobin subunit alpha-2 (hba2) (Trematomus newnesi (Dusky notothen)).